The primary structure comprises 663 residues: Pyoverdine export ATP-binding/permease protein PvdT (663 aa).

Residues Ile11–Gln250 enclose the ABC transporter domain. Residue Gly48–Ser55 participates in ATP binding. Helical transmembrane passes span Ala292 to Gly312, Ile545 to Val565, Val598 to Gly618, and Leu626 to Met646.

It belongs to the ABC transporter superfamily. Macrolide exporter (TC 3.A.1.122) family. Part of the tripartite efflux system PvdRT-OpmQ, which is composed of an inner membrane component with both ATPase and permease domains, PvdT, a periplasmic membrane fusion protein, PvdR, and an outer membrane component, OpmQ.

The protein localises to the cell inner membrane. Functionally, part of the tripartite efflux system PvdRT-OpmQ required for the secretion into the extracellular milieu of the siderophore pyoverdine (PVD), which is involved in iron acquisition. This subunit binds PVD and drives its secretion by hydrolyzing ATP. The system is responsible for export of newly synthesized PVD after the final steps of biosynthesis have taken place in the periplasm. It is also responsible for recycling of PVD after internalization of ferri-PVD into the periplasm by the outer-membrane receptor FpvA and release of iron from PVD, thus making PVD available for new cycles of iron uptake. In addition, can expel unwanted metals complexed with PVD from the periplasm into the extracellular medium. The sequence is that of Pyoverdine export ATP-binding/permease protein PvdT from Pseudomonas aeruginosa (strain ATCC 15692 / DSM 22644 / CIP 104116 / JCM 14847 / LMG 12228 / 1C / PRS 101 / PAO1).